The following is a 458-amino-acid chain: Tyrosine phenol-lyase (458 aa).

An N6-(pyridoxal phosphate)lysine modification is found at Lys-258.

It belongs to the beta-eliminating lyase family. As to quaternary structure, homotetramer. The cofactor is pyridoxal 5'-phosphate.

It carries out the reaction L-tyrosine + H2O = phenol + pyruvate + NH4(+). In Symbiobacterium sp. (strain SC-1), this protein is Tyrosine phenol-lyase (tpl).